An 829-amino-acid polypeptide reads, in one-letter code: Potassium voltage-gated channel unc-103 (829 aa).

A disordered region spans residues 1-76 (MKTAVFGRDS…PRASHSSRRT (76 aa)). The Cytoplasmic portion of the chain corresponds to 1–123 (MKTAVFGRDS…YSPFKAVWDW (123 aa)). Residues 46–66 (GVSGTGGGGSGGLQGAPGAGG) are compositionally biased toward gly residues. The chain crosses the membrane as a helical span at residues 124–144 (IILLLVIYTAVFTPYVAAFLL). The Extracellular portion of the chain corresponds to 145 to 158 (RELQDTAKKSRFTE). A helical membrane pass occupies residues 159–179 (PLEIVDLIVDIMFIVDIIINF). The Cytoplasmic segment spans residues 180-203 (RTTYVNENDEACQVVSDPGKIATH). Residues 204–224 (YFKGWFIIDMVAAVPFDLLLV) traverse the membrane as a helical segment. Topologically, residues 225-234 (STNSDETTTL) are extracellular. The helical; Voltage-sensor transmembrane segment at 235-255 (IGLLKTARLLRLVRVARKLDR) threads the bilayer. Residues 256-261 (YSEYGA) lie on the Cytoplasmic side of the membrane. The chain crosses the membrane as a helical span at residues 262–282 (AVLLLLMATFALIAHWLACIW). At 283 to 327 (YAIGSAELSHKEYTWLHQLSKQLAQPYTSTNGTIPTGGPTLKSRY) the chain is on the extracellular side. Asn313 carries N-linked (GlcNAc...) asparagine glycosylation. The pore-forming intramembrane region spans 328-348 (VTSLYFTLSTITSIGFGNVSA). The Extracellular portion of the chain corresponds to 349 to 354 (TTDSEK). The helical transmembrane segment at 355 to 375 (IFTIIMMILGSLMYASVFGNV) threads the bilayer. The Cytoplasmic segment spans residues 376 to 829 (SAIIQRLYSG…TPTQETDTIL (454 aa)). A nucleoside 3',5'-cyclic phosphate is bound at residue 458–559 (AFAGSTPGCL…ILRDDLLDVL (102 aa)). The interval 601-674 (SMNKDRYTTP…PLLRRSTNHH (74 aa)) is disordered. Positions 603 to 615 (NKDRYTTPPDGDH) are enriched in basic and acidic residues. A compositionally biased stretch (low complexity) spans 640–650 (SAGSRSSSRCS).

It belongs to the potassium channel family. H (Eag) (TC 1.A.1.20) subfamily. Kv11.1/KCNH2 sub-subfamily. As to quaternary structure, the potassium channel is composed of a homo- or heterotetrameric complex. Interacts with dnj-1; dnj-1 chaperone promotes tetramerization.

It is found in the cell membrane. In terms of biological role, pore-forming (alpha) subunit of voltage-gated inwardly rectifying potassium channel. Channel properties are modulated by cAMP and subunit assembly. Regulates the movements of the male's copulatory spicules before and during male mating behavior. The protein is Potassium voltage-gated channel unc-103 of Caenorhabditis elegans.